A 287-amino-acid chain; its full sequence is Large ribosomal subunit protein uL2 (287 aa).

Residues 221 to 287 form a disordered region; it reads RGSVMNPCDH…SKRSRGGRDS (67 aa). The span at 258 to 287 shows a compositional bias: basic residues; it reads KTRKKNKPSNKLVVRRRRRISKRSRGGRDS.

This sequence belongs to the universal ribosomal protein uL2 family. In terms of assembly, part of the 50S ribosomal subunit. Forms a bridge to the 30S subunit in the 70S ribosome.

Functionally, one of the primary rRNA binding proteins. Required for association of the 30S and 50S subunits to form the 70S ribosome, for tRNA binding and peptide bond formation. It has been suggested to have peptidyltransferase activity; this is somewhat controversial. Makes several contacts with the 16S rRNA in the 70S ribosome. This is Large ribosomal subunit protein uL2 from Prochlorococcus marinus (strain MIT 9215).